Reading from the N-terminus, the 198-residue chain is Zinc finger protein 41 homolog (198 aa).

Over residues 1-12 (MEKPAGRKKKTP) the composition is skewed to basic residues. Residues 1-55 (MEKPAGRKKKTPTPREEADVQKSALREEKVSGDRKPPERPTVPRKPRTEPCLSPE) are disordered. A compositionally biased stretch (basic and acidic residues) spans 13–38 (TPREEADVQKSALREEKVSGDRKPPE). C2H2-type zinc fingers lie at residues 87–109 (YECS…QRVH), 115–137 (FKCA…QRTH), 143–165 (FKCG…QKTH), and 171–193 (YECT…QKRH).

The protein belongs to the krueppel C2H2-type zinc-finger protein family.

Its subcellular location is the nucleus. Its function is as follows. A putative DNA-binding regulatory protein associated with meiosis in spermatogenesis. The polypeptide is Zinc finger protein 41 homolog (ZFP41) (Homo sapiens (Human)).